The following is a 345-amino-acid chain: Fe(3+) ions import ATP-binding protein FbpC (345 aa).

The ABC transporter domain occupies 4 to 236 (LELHGIGKSY…PVDEPTASFL (233 aa)). 36–43 (GPSGSGKT) is a binding site for ATP.

This sequence belongs to the ABC transporter superfamily. Fe(3+) ion importer (TC 3.A.1.10) family. In terms of assembly, the complex is composed of two ATP-binding proteins (FbpC), two transmembrane proteins (FbpB) and a solute-binding protein (FbpA).

The protein localises to the cell inner membrane. The enzyme catalyses Fe(3+)(out) + ATP + H2O = Fe(3+)(in) + ADP + phosphate + H(+). Part of the ABC transporter complex FbpABC involved in Fe(3+) ions import. Responsible for energy coupling to the transport system. The chain is Fe(3+) ions import ATP-binding protein FbpC from Serratia marcescens.